A 225-amino-acid chain; its full sequence is Probable septum site-determining protein MinC (225 aa).

The protein belongs to the MinC family. As to quaternary structure, interacts with MinD and FtsZ.

In terms of biological role, cell division inhibitor that blocks the formation of polar Z ring septums. Rapidly oscillates between the poles of the cell to destabilize FtsZ filaments that have formed before they mature into polar Z rings. Prevents FtsZ polymerization. This is Probable septum site-determining protein MinC from Listeria welshimeri serovar 6b (strain ATCC 35897 / DSM 20650 / CCUG 15529 / CIP 8149 / NCTC 11857 / SLCC 5334 / V8).